We begin with the raw amino-acid sequence, 69 residues long: ATP synthase subunits region ORF 1 (69 aa).

The protein is ATP synthase subunits region ORF 1 of Fuscovulum blasticum (Rhodobacter blasticus).